Here is a 272-residue protein sequence, read N- to C-terminus: Elongation factor Ts (272 aa).

Positions 76–79 are involved in Mg(2+) ion dislocation from EF-Tu; sequence TDFV.

It belongs to the EF-Ts family.

Its subcellular location is the cytoplasm. In terms of biological role, associates with the EF-Tu.GDP complex and induces the exchange of GDP to GTP. It remains bound to the aminoacyl-tRNA.EF-Tu.GTP complex up to the GTP hydrolysis stage on the ribosome. The chain is Elongation factor Ts from Corynebacterium jeikeium (strain K411).